Consider the following 92-residue polypeptide: Small ribosomal subunit protein uS19 (92 aa).

The protein belongs to the universal ribosomal protein uS19 family.

Protein S19 forms a complex with S13 that binds strongly to the 16S ribosomal RNA. This is Small ribosomal subunit protein uS19 from Acholeplasma laidlawii (strain PG-8A).